Reading from the N-terminus, the 282-residue chain is tRNA pseudouridine synthase A (282 aa).

D51 serves as the catalytic Nucleophile. Y109 contributes to the substrate binding site.

Belongs to the tRNA pseudouridine synthase TruA family. As to quaternary structure, homodimer.

The catalysed reaction is uridine(38/39/40) in tRNA = pseudouridine(38/39/40) in tRNA. Functionally, formation of pseudouridine at positions 38, 39 and 40 in the anticodon stem and loop of transfer RNAs. This Delftia acidovorans (strain DSM 14801 / SPH-1) protein is tRNA pseudouridine synthase A.